We begin with the raw amino-acid sequence, 461 residues long: Elongation factor 1-alpha, oocyte form (461 aa).

Glycine 2 is subject to N,N,N-trimethylglycine. A tr-type G domain is found at 5-242 (KIHINIVVIG…DCIIPPQRPT (238 aa)). Residues 14–21 (GHVDSGKS) form a G1 region. 14-21 (GHVDSGKS) provides a ligand contact to GTP. Residues 70-74 (GITID) form a G2 region. The tract at residues 91–94 (DAPG) is G3. Residues 91-95 (DAPGH) and 153-156 (NKMD) contribute to the GTP site. Positions 153–156 (NKMD) are G4. Positions 194 to 196 (SGW) are G5. 5-glutamyl glycerylphosphorylethanolamine occurs at positions 301 and 374.

It belongs to the TRAFAC class translation factor GTPase superfamily. Classic translation factor GTPase family. EF-Tu/EF-1A subfamily. Oocyte.

It is found in the cytoplasm. Functionally, this protein promotes the GTP-dependent binding of aminoacyl-tRNA to the A-site of ribosomes during protein biosynthesis. This is Elongation factor 1-alpha, oocyte form (eef1ao) from Xenopus laevis (African clawed frog).